The primary structure comprises 767 residues: E3 ubiquitin-protein ligase pub1 (767 aa).

In terms of domain architecture, C2 spans 1 to 111 (MSNSAQSRRI…AIGGDEMLTR (111 aa)). Residues 138–158 (LQVPSSAASGARTQRTSITND) show a composition bias toward polar residues. 2 disordered regions span residues 138–216 (LQVP…RRTD) and 252–306 (SASS…RPYF). Threonine 156 is modified (phosphothreonine). Residues 159–176 (PQSSQSSSVSRNPASSRA) show a composition bias toward low complexity. The residue at position 178 (serine 178) is a Phosphoserine. Threonine 180 is modified (phosphothreonine). A compositionally biased stretch (low complexity) spans 184–194 (APAASPASSEP). The 26-residue stretch at 211–236 (WERRTDNLGRTYYVDHNTRSTTWIRP) folds into the WW 1 domain. Residues 257–286 (NVTEGVQPSSSNAARRTEASVLTSNATTAG) show a composition bias toward polar residues. WW domains follow at residues 294 to 319 (WEQR…WVDP) and 351 to 376 (WEMR…WDDP). In terms of domain architecture, HECT spans 463 to 767 (FLLSHEMFNP…VEETIGFGQE (305 aa)). Residue cysteine 735 is the Glycyl thioester intermediate of the active site.

Its subcellular location is the membrane. It localises to the cytoplasm. The catalysed reaction is S-ubiquitinyl-[E2 ubiquitin-conjugating enzyme]-L-cysteine + [acceptor protein]-L-lysine = [E2 ubiquitin-conjugating enzyme]-L-cysteine + N(6)-ubiquitinyl-[acceptor protein]-L-lysine.. It participates in protein modification; protein ubiquitination. Functionally, E3 ubiquitin-protein ligase which accepts ubiquitin from an E2 ubiquitin-conjugating enzyme in the form of a thioester and then directly transfers the ubiquitin to targeted substrates. Regulates ubiquitination of cdc25. This is E3 ubiquitin-protein ligase pub1 (pub1) from Schizosaccharomyces pombe (strain 972 / ATCC 24843) (Fission yeast).